The primary structure comprises 415 residues: Teichoic acid D-alanyltransferase (415 aa).

Topologically, residues 1 to 16 are extracellular; sequence MIDFLKQLPHLEPYGN. The chain crosses the membrane as a helical span at residues 17-36; it reads PFYFIYLGIALLPIFIGLFF. The Cytoplasmic segment spans residues 37 to 40; sequence KKRF. The helical transmembrane segment at 41-56 threads the bilayer; the sequence is AIYECLVSITFIVLAL. The Extracellular portion of the chain corresponds to 57–60; that stretch reads TGTH. The helical transmembrane segment at 61–87 threads the bilayer; that stretch reads ASQILALLFYIVWQIIWVYSYKRYRSQ. Residues 88-90 lie on the Cytoplasmic side of the membrane; sequence RDN. Residues 91–115 traverse the membrane as a helical segment; that stretch reads KWVFYLHSFLVVLPLILVKVEPTIN. Over 116–125 the chain is Extracellular; that stretch reads GTQSLLNFLG. A helical membrane pass occupies residues 126–142; the sequence is ISYLTFRAVGMIIEMRD. Topologically, residues 143-149 are cytoplasmic; sequence GVLKEFT. The stretch at 150–179 is an intramembrane region; that stretch reads LGEFLRFMLFMPTFTSGPIDRFKRFNEDYQ. The Cytoplasmic portion of the chain corresponds to 180 to 183; the sequence is SIPN. Residues 184-227 form a helical membrane-spanning segment; sequence RDELLNMLEQAVKYIMLGFLYKFVLAQIFGSMLLPPLKAQALSQ. Residues 228 to 232 are Extracellular-facing; the sequence is GGIFN. Residues 233–264 form a helical membrane-spanning segment; the sequence is LPTLGVMYVYGFDLFFDFAGYSMFALAVSNLM. Over 265 to 274 the chain is Cytoplasmic; that stretch reads GIKSPINFDK. Residues 275-311 lie within the membrane without spanning it; it reads PFISRDMKEFWNRWHMSLSFWFRDFVFMRLVIVLMRN. At 312–316 the chain is on the cytoplasmic side; sequence KVFKN. Residues 317–336 traverse the membrane as a helical segment; the sequence is RNTTSNVAYIINMMVMGFWH. Residue His336 is part of the active site. Topologically, residues 337–339 are extracellular; it reads GIT. The chain crosses the membrane as a helical span at residues 340-373; it reads WYYIAYGIFHGIGLVINDAWLRKKKTINKDRKKA. Over 374 to 381 the chain is Cytoplasmic; the sequence is GLKPLPEN. Residues 382 to 404 form a helical membrane-spanning segment; sequence KWTKALGIFITFNTVMLSFLIFS. The Extracellular portion of the chain corresponds to 405 to 415; that stretch reads GFLNDLWFTKK.

The protein belongs to the membrane-bound acyltransferase family.

The protein localises to the cell membrane. It participates in cell wall biogenesis; lipoteichoic acid biosynthesis. Its function is as follows. O-acyltransferase that catalyzes D-alanylation of both teichoic acid and lipoteichoic acid (LTA). D-alanylation of LTA plays an important role in modulating the properties of the cell wall in Gram-positive bacteria, influencing the net charge of the cell wall. Catalyzes D-alanylation from DltC carrier protein. In Streptococcus thermophilus (strain ATCC BAA-250 / LMG 18311), this protein is Teichoic acid D-alanyltransferase.